A 642-amino-acid polypeptide reads, in one-letter code: Probable Xaa-Pro aminopeptidase P (642 aa).

Positions 439, 450, 548, and 562 each coordinate Mn(2+).

Belongs to the peptidase M24B family. Mn(2+) serves as cofactor.

The enzyme catalyses Release of any N-terminal amino acid, including proline, that is linked to proline, even from a dipeptide or tripeptide.. Catalyzes the removal of a penultimate prolyl residue from the N-termini of peptides. The protein is Probable Xaa-Pro aminopeptidase P (AMPP) of Laccaria bicolor (strain S238N-H82 / ATCC MYA-4686) (Bicoloured deceiver).